A 477-amino-acid polypeptide reads, in one-letter code: Histidine permease HisP (477 aa).

Transmembrane regions (helical) follow at residues I16 to T36, A40 to M60, P86 to V106, I126 to F146, I156 to L176, H192 to F212, S238 to I258, I284 to S304, I337 to G359, L364 to I386, W408 to D428, and W437 to Y457.

Belongs to the amino acid-polyamine-organocation (APC) superfamily. Amino acid transporter (AAT) (TC 2.A.3.1) family.

It is found in the cell membrane. In terms of biological role, involved in histidine uptake. Has low affinity for arginine and lysine. Plays no significant role in the excretion of accumulated histidine. The chain is Histidine permease HisP from Lactococcus lactis subsp. cremoris (strain MG1363).